The sequence spans 270 residues: uncharacterized protein (270 aa).

This is an uncharacterized protein from Bacillus subtilis (strain 168).